A 137-amino-acid polypeptide reads, in one-letter code: Holo-[acyl-carrier-protein] synthase (137 aa).

Mg(2+) contacts are provided by Asp7 and Glu58.

Belongs to the P-Pant transferase superfamily. AcpS family. Mg(2+) serves as cofactor.

Its subcellular location is the cytoplasm. The enzyme catalyses apo-[ACP] + CoA = holo-[ACP] + adenosine 3',5'-bisphosphate + H(+). In terms of biological role, transfers the 4'-phosphopantetheine moiety from coenzyme A to a Ser of acyl-carrier-protein. This chain is Holo-[acyl-carrier-protein] synthase, found in Chloroflexus aurantiacus (strain ATCC 29366 / DSM 635 / J-10-fl).